A 104-amino-acid chain; its full sequence is SOSS complex subunit C (104 aa).

Residue Ala2 is modified to N-acetylalanine. A Phosphoserine modification is found at Ser50.

The protein belongs to the SOSS-C family. In terms of assembly, component of the SOSS complex, composed of SOSS-B (SOSS-B1/NABP2 or SOSS-B2/NABP1), SOSS-A/INTS3 and SOSS-C/INIP. SOSS complexes containing SOSS-B1/NABP2 are more abundant than complexes containing SOSS-B2/NABP1. Interacts with INTS3; the interaction is direct.

Its subcellular location is the nucleus. In terms of biological role, component of the SOSS complex, a multiprotein complex that functions downstream of the MRN complex to promote DNA repair and G2/M checkpoint. The SOSS complex associates with single-stranded DNA at DNA lesions and influences diverse endpoints in the cellular DNA damage response including cell-cycle checkpoint activation, recombinational repair and maintenance of genomic stability. Required for efficient homologous recombination-dependent repair of double-strand breaks (DSBs) and ATM-dependent signaling pathways. The chain is SOSS complex subunit C (Inip) from Mus musculus (Mouse).